Consider the following 527-residue polypeptide: MSDLLSRRLALLGAAANLPLLTECLHGIERECLRVDSDGKLALTPHPRALGSTLTHPQITTDYSEALLEFITPTETDVADTLGDLERIHRFASSKLDGEYLWSPSMPCELPDEESIPIARYGSSLIGRLKYVYRKGLALRYGKTMQCIAGIHYNFSLPERLWPLLRQAEGSELSERDYQSAAYIALIRNFRRYSWLLMYLFGASPALDAGFLRGRPSQLERLDEHTLYLPYATSLRMSDLGYQNNAQAGLTPCYNDLQSYIDSLRQAVSTPYPPYEKVGTKQDGEWVQLNTNILQIENEYYSSIRPKRVTYTGERPVQALAARGVQYVEVRCLDINPFLPLGIDLDEARFLDAFLLFCAFSDSPLLNGECSDATDNFLAVVKEGRRPGLQLQRRGQPVELKVWANELLERIADTAALLDRARGGEAHAAALAAQRAKVADAELTPSAQVLKVMRERGESFEAFSLRQSREHAEYFRQHPLAAEEQARFEKMASDSLAEQTELERDQDGDFDTFVAAYQASILGLISN.

Belongs to the glutamate--cysteine ligase type 1 family. Type 1 subfamily.

The catalysed reaction is L-cysteine + L-glutamate + ATP = gamma-L-glutamyl-L-cysteine + ADP + phosphate + H(+). It participates in sulfur metabolism; glutathione biosynthesis; glutathione from L-cysteine and L-glutamate: step 1/2. This chain is Glutamate--cysteine ligase, found in Pseudomonas aeruginosa (strain UCBPP-PA14).